The following is a 244-amino-acid chain: Orotidine 5'-phosphate decarboxylase (244 aa).

Substrate is bound by residues Asp-18, Lys-43, 73–82 (DLKLADIGYI), Ser-130, 182–192 (PGVGAQGGKPG), Gly-206, and Arg-207. Lys-75 functions as the Proton donor in the catalytic mechanism.

It belongs to the OMP decarboxylase family. Type 1 subfamily. Homodimer.

It carries out the reaction orotidine 5'-phosphate + H(+) = UMP + CO2. The protein operates within pyrimidine metabolism; UMP biosynthesis via de novo pathway; UMP from orotate: step 2/2. Its function is as follows. Catalyzes the decarboxylation of orotidine 5'-monophosphate (OMP) to uridine 5'-monophosphate (UMP). This Aeropyrum pernix (strain ATCC 700893 / DSM 11879 / JCM 9820 / NBRC 100138 / K1) protein is Orotidine 5'-phosphate decarboxylase.